We begin with the raw amino-acid sequence, 256 residues long: Probable hydroxyacylglutathione hydrolase glo2 (256 aa).

Zn(2+) is bound by residues His63, His65, Asp67, His68, His118, and Asp139. Substrate contacts are provided by residues Arg148, 178–180 (HEY), and 250–253 (RDMK). A Zn(2+)-binding site is contributed by His178.

It belongs to the metallo-beta-lactamase superfamily. Glyoxalase II family. Zn(2+) serves as cofactor.

The protein localises to the cytoplasm. Its subcellular location is the nucleus. The catalysed reaction is an S-(2-hydroxyacyl)glutathione + H2O = a 2-hydroxy carboxylate + glutathione + H(+). It catalyses the reaction (R)-S-lactoylglutathione + H2O = (R)-lactate + glutathione + H(+). It participates in secondary metabolite metabolism; methylglyoxal degradation; (R)-lactate from methylglyoxal: step 2/2. Functionally, thiolesterase that catalyzes the hydrolysis of S-D-lactoylglutathione to form glutathione and D-lactic acid. Involved in the metabolism of methylglyoxal, a toxic compound for yeast proliferation, by converting methylglyoxal to lactate via S-D-lactoylglutathione by sequential enzyme reactions catalyzed by glyoxalase I and glyoxalase II. This chain is Probable hydroxyacylglutathione hydrolase glo2 (glo2), found in Schizosaccharomyces pombe (strain 972 / ATCC 24843) (Fission yeast).